A 300-amino-acid polypeptide reads, in one-letter code: Ribosomal protein bS6--L-glutamate ligase (300 aa).

The ATP-grasp domain maps to 104-287; sequence MQLLARQGID…IAGKMIRWIE (184 aa). ATP-binding positions include lysine 141, 178-179, aspartate 187, and 211-213; these read EY and RSN. The Mg(2+) site is built by aspartate 248, glutamate 260, and asparagine 262. Mn(2+) is bound by residues aspartate 248, glutamate 260, and asparagine 262.

Belongs to the RimK family. The cofactor is Mg(2+). It depends on Mn(2+) as a cofactor.

An L-glutamate ligase that catalyzes the ATP-dependent post-translational addition of glutamate residues to the C-terminus of ribosomal protein bS6 (RpsF). Is also able to catalyze the synthesis of poly-alpha-glutamate in vitro, via ATP hydrolysis from unprotected glutamate as substrate. The number of glutamate residues added to either RpsF or to poly-alpha-glutamate changes with pH. This is Ribosomal protein bS6--L-glutamate ligase from Shigella flexneri serotype 5b (strain 8401).